A 107-amino-acid polypeptide reads, in one-letter code: Nucleoid-associated protein Hhal_0231 (107 aa).

2 disordered regions span residues Met-1 to Glu-24 and Val-82 to Phe-107. A compositionally biased stretch (basic and acidic residues) spans Met-15–Glu-24.

It belongs to the YbaB/EbfC family. As to quaternary structure, homodimer.

The protein localises to the cytoplasm. The protein resides in the nucleoid. In terms of biological role, binds to DNA and alters its conformation. May be involved in regulation of gene expression, nucleoid organization and DNA protection. In Halorhodospira halophila (strain DSM 244 / SL1) (Ectothiorhodospira halophila (strain DSM 244 / SL1)), this protein is Nucleoid-associated protein Hhal_0231.